Here is a 326-residue protein sequence, read N- to C-terminus: Beta-ketoacyl-[acyl-carrier-protein] synthase III (326 aa).

Active-site residues include C120 and H253. The interval 254 to 258 (QANIR) is ACP-binding. The active site involves N283.

It belongs to the thiolase-like superfamily. FabH family. As to quaternary structure, homodimer.

The protein resides in the cytoplasm. It carries out the reaction malonyl-[ACP] + acetyl-CoA + H(+) = 3-oxobutanoyl-[ACP] + CO2 + CoA. It functions in the pathway lipid metabolism; fatty acid biosynthesis. In terms of biological role, catalyzes the condensation reaction of fatty acid synthesis by the addition to an acyl acceptor of two carbons from malonyl-ACP. Catalyzes the first condensation reaction which initiates fatty acid synthesis and may therefore play a role in governing the total rate of fatty acid production. Possesses both acetoacetyl-ACP synthase and acetyl transacylase activities. Its substrate specificity determines the biosynthesis of branched-chain and/or straight-chain of fatty acids. This is Beta-ketoacyl-[acyl-carrier-protein] synthase III from Ralstonia nicotianae (strain ATCC BAA-1114 / GMI1000) (Ralstonia solanacearum).